The primary structure comprises 463 residues: V-type proton ATPase subunit S1 (463 aa).

A signal peptide spans Met1–Ala32. A propeptide spanning residues Val33–Arg225 is cleaved from the precursor. Over Val33–Ala412 the chain is Lumenal. N-linked (GlcNAc...) asparagine glycosylation is found at Asn164, Asn255, Asn267, Asn290, Asn297, Asn344, Asn351, and Asn399. A disulfide bond links Cys365 and Cys411. Residues Gly413–Phe433 traverse the membrane as a helical segment. The Cytoplasmic segment spans residues Thr434–Val463.

It belongs to the vacuolar ATPase subunit S1 family. As to quaternary structure, accessory component of the multisubunit proton-transporting vacuolar (V)-ATPase protein pump. Interacts (via N-terminus) with ATP6AP2 (via N-terminus). Interacts with RNASEK. Interacts with TMEM106B (via C-terminus). N-glycosylated. In terms of tissue distribution, expressed in brain cortex (at protein level). Highly expressed in islets of Langerhans. Expressed in pancreatic acini, pituitary gland, adrenal gland, lung, brain and bone marrow.

Its subcellular location is the endoplasmic reticulum membrane. It localises to the endoplasmic reticulum-Golgi intermediate compartment membrane. It is found in the cytoplasmic vesicle. The protein resides in the secretory vesicle. The protein localises to the synaptic vesicle membrane. Its subcellular location is the clathrin-coated vesicle membrane. Its function is as follows. Accessory subunit of the proton-transporting vacuolar (V)-ATPase protein pump, which is required for luminal acidification of secretory vesicles. Guides the V-type ATPase into specialized subcellular compartments, such as neuroendocrine regulated secretory vesicles or the ruffled border of the osteoclast, thereby regulating its activity. Involved in membrane trafficking and Ca(2+)-dependent membrane fusion. May play a role in the assembly of the V-type ATPase complex. In aerobic conditions, involved in intracellular iron homeostasis, thus triggering the activity of Fe(2+) prolyl hydroxylase (PHD) enzymes, and leading to HIF1A hydroxylation and subsequent proteasomal degradation. In islets of Langerhans cells, may regulate the acidification of dense-core secretory granules. The sequence is that of V-type proton ATPase subunit S1 (Atp6ap1) from Mus musculus (Mouse).